The following is a 297-amino-acid chain: N-acetylneuraminate lyase (297 aa).

Aceneuramate-binding residues include Ser-47 and Thr-48. Catalysis depends on Tyr-137, which acts as the Proton donor. Catalysis depends on Lys-165, which acts as the Schiff-base intermediate with substrate. Positions 167, 189, 191, 192, and 208 each coordinate aceneuramate.

Belongs to the DapA family. NanA subfamily. In terms of assembly, homotetramer.

The protein resides in the cytoplasm. The enzyme catalyses aceneuramate = aldehydo-N-acetyl-D-mannosamine + pyruvate. The protein operates within amino-sugar metabolism; N-acetylneuraminate degradation; D-fructose 6-phosphate from N-acetylneuraminate: step 1/5. Its function is as follows. Catalyzes the reversible aldol cleavage of N-acetylneuraminic acid (sialic acid; Neu5Ac) to form pyruvate and N-acetylmannosamine (ManNAc) via a Schiff base intermediate. This is N-acetylneuraminate lyase from Escherichia coli (strain SE11).